The sequence spans 496 residues: Bifunctional protein HldE (496 aa).

A ribokinase region spans residues 1 to 331 (MDPTPALAEI…AAVHQEEVSA (331 aa)). 206-209 (NRKE) provides a ligand contact to ATP. D276 is an active-site residue. The interval 358-496 (FTNGCFDLLH…GGSRRSGDTL (139 aa)) is cytidylyltransferase.

In the N-terminal section; belongs to the carbohydrate kinase PfkB family. This sequence in the C-terminal section; belongs to the cytidylyltransferase family. Homodimer.

It carries out the reaction D-glycero-beta-D-manno-heptose 7-phosphate + ATP = D-glycero-beta-D-manno-heptose 1,7-bisphosphate + ADP + H(+). The enzyme catalyses D-glycero-beta-D-manno-heptose 1-phosphate + ATP + H(+) = ADP-D-glycero-beta-D-manno-heptose + diphosphate. The protein operates within nucleotide-sugar biosynthesis; ADP-L-glycero-beta-D-manno-heptose biosynthesis; ADP-L-glycero-beta-D-manno-heptose from D-glycero-beta-D-manno-heptose 7-phosphate: step 1/4. It functions in the pathway nucleotide-sugar biosynthesis; ADP-L-glycero-beta-D-manno-heptose biosynthesis; ADP-L-glycero-beta-D-manno-heptose from D-glycero-beta-D-manno-heptose 7-phosphate: step 3/4. Catalyzes the phosphorylation of D-glycero-D-manno-heptose 7-phosphate at the C-1 position to selectively form D-glycero-beta-D-manno-heptose-1,7-bisphosphate. In terms of biological role, catalyzes the ADP transfer from ATP to D-glycero-beta-D-manno-heptose 1-phosphate, yielding ADP-D-glycero-beta-D-manno-heptose. The chain is Bifunctional protein HldE from Rhodospirillum rubrum (strain ATCC 11170 / ATH 1.1.1 / DSM 467 / LMG 4362 / NCIMB 8255 / S1).